Consider the following 463-residue polypeptide: L-seryl-tRNA(Sec) selenium transferase (463 aa).

The residue at position 295 (lysine 295) is an N6-(pyridoxal phosphate)lysine.

The protein belongs to the SelA family. In terms of assembly, homodecamer; pentamer of dimers. Binds only one seryl-tRNA(Sec) per dimer. It depends on pyridoxal 5'-phosphate as a cofactor.

The protein resides in the cytoplasm. It carries out the reaction L-seryl-tRNA(Sec) + selenophosphate + H(+) = L-selenocysteinyl-tRNA(Sec) + phosphate. Its pathway is aminoacyl-tRNA biosynthesis; selenocysteinyl-tRNA(Sec) biosynthesis; selenocysteinyl-tRNA(Sec) from L-seryl-tRNA(Sec) (bacterial route): step 1/1. Converts seryl-tRNA(Sec) to selenocysteinyl-tRNA(Sec) required for selenoprotein biosynthesis. The protein is L-seryl-tRNA(Sec) selenium transferase of Escherichia coli O17:K52:H18 (strain UMN026 / ExPEC).